We begin with the raw amino-acid sequence, 329 residues long: Ferredoxin--NADP reductase (329 aa).

The FAD site is built by Asp28, Gln36, Tyr41, Ala81, Phe115, Asp282, and Thr323.

Belongs to the ferredoxin--NADP reductase type 2 family. Homodimer. FAD serves as cofactor.

The enzyme catalyses 2 reduced [2Fe-2S]-[ferredoxin] + NADP(+) + H(+) = 2 oxidized [2Fe-2S]-[ferredoxin] + NADPH. The chain is Ferredoxin--NADP reductase from Anaplasma marginale (strain St. Maries).